A 134-amino-acid polypeptide reads, in one-letter code: Small ribosomal subunit protein uS8c (134 aa).

The protein belongs to the universal ribosomal protein uS8 family. Part of the 30S ribosomal subunit.

The protein localises to the plastid. It localises to the chloroplast. One of the primary rRNA binding proteins, it binds directly to 16S rRNA central domain where it helps coordinate assembly of the platform of the 30S subunit. This is Small ribosomal subunit protein uS8c (rps8) from Gossypium barbadense (Sea Island cotton).